Consider the following 154-residue polypeptide: MGGIMDARRLEDEVEMPLEGIVYGEVSGWLTIIGILVAIAGIIIGVVTGNSVFDYQSTIKDLLSGHDEEKIWTDDSIFHSEPHGYWFLNVIHTGDGIAMFGIALAVYGGIVGLLLLIVFTFRSREVLLYKKGLYTFLAIAIFCLMVYCAWEAEF.

A run of 3 helical transmembrane segments spans residues 26–48 (VSGWLTIIGILVAIAGIIIGVVT), 97–119 (IAMFGIALAVYGGIVGLLLLIVF), and 132–150 (GLYTFLAIAIFCLMVYCAW).

Its subcellular location is the cell membrane. This is an uncharacterized protein from Archaeoglobus fulgidus (strain ATCC 49558 / DSM 4304 / JCM 9628 / NBRC 100126 / VC-16).